The chain runs to 309 residues: 2-oxoacid:ferredoxin oxidoreductase 2, subunit beta (309 aa).

The [4Fe-4S] cluster site is built by cysteine 17, cysteine 20, and cysteine 51. Thiamine diphosphate-binding positions include 49–52 (IGCS) and histidine 68. Position 93 (aspartate 93) interacts with Mg(2+). 94 to 95 (GD) contacts thiamine diphosphate. Mg(2+) contacts are provided by asparagine 121 and valine 123. A thiamine diphosphate-binding site is contributed by 125-126 (GL). Residue cysteine 200 participates in [4Fe-4S] cluster binding.

As to quaternary structure, heterodimer composed of an alpha and a beta subunit. Requires [4Fe-4S] cluster as cofactor. Thiamine diphosphate serves as cofactor. It depends on Mg(2+) as a cofactor.

It catalyses the reaction a 2-oxocarboxylate + 2 oxidized [2Fe-2S]-[ferredoxin] + CoA = an acyl-CoA + 2 reduced [2Fe-2S]-[ferredoxin] + CO2 + H(+). Functionally, catalyzes the coenzyme A-dependent oxidative decarboxylation of different 2-oxoacids such as pyruvate, 2-oxobutyrate, glyoxylate and 2-oxoglutarate to form their CoA derivatives. In Aeropyrum pernix (strain ATCC 700893 / DSM 11879 / JCM 9820 / NBRC 100138 / K1), this protein is 2-oxoacid:ferredoxin oxidoreductase 2, subunit beta.